Consider the following 179-residue polypeptide: Translation initiation factor IF-3 (179 aa).

Belongs to the IF-3 family. As to quaternary structure, monomer.

Its subcellular location is the cytoplasm. IF-3 binds to the 30S ribosomal subunit and shifts the equilibrium between 70S ribosomes and their 50S and 30S subunits in favor of the free subunits, thus enhancing the availability of 30S subunits on which protein synthesis initiation begins. This chain is Translation initiation factor IF-3, found in Zymomonas mobilis subsp. mobilis (strain ATCC 31821 / ZM4 / CP4).